The chain runs to 396 residues: G-protein coupled receptor 84 (396 aa).

Residues 1 to 26 (MWNSSDANFSCYHESVLGYRYVAVSW) lie on the Extracellular side of the membrane. Residues N3 and N8 are each glycosylated (N-linked (GlcNAc...) asparagine). The chain crosses the membrane as a helical span at residues 27–47 (GVVVAVTGTVGNVLTLLALAI). Over 48 to 57 (QPKLRTRFNL) the chain is Cytoplasmic. The chain crosses the membrane as a helical span at residues 58–78 (LIANLTLADLLYCTLLQPFSV). Residues 79 to 94 (DTYLHLHWRTGATFCR) lie on the Extracellular side of the membrane. The helical transmembrane segment at 95 to 115 (VFGLLLFASNSVSILTLCLIA) threads the bilayer. The Cytoplasmic segment spans residues 116–144 (LGRYLLIAHPKLFPQVFSAKGIVLALVST). The helical transmembrane segment at 145-165 (WVVGVASFAPLWPIYILVPVV) threads the bilayer. At 166–180 (CTCSFDRIRGRPYTT) the chain is on the extracellular side. A helical transmembrane segment spans residues 181-201 (ILMGIYFVLGLSSVGIFYCLI). The Cytoplasmic portion of the chain corresponds to 202–320 (HRQVKRAAQA…SSEFGKVTRM (119 aa)). Phosphoserine occurs at positions 221 and 224. Residues 244-311 (RLASGGPSEG…KGARRAPDSS (68 aa)) form a disordered region. Residues 247 to 260 (SGGPSEGISSEPVS) show a composition bias toward low complexity. T263 and T264 each carry phosphothreonine. Residues 321-341 (CFAVFLCFALSYIPFLLLNIL) form a helical membrane-spanning segment. Topologically, residues 342 to 352 (DARVQAPRVVH) are extracellular. A helical transmembrane segment spans residues 353–373 (MLAANLTWLNGCINPVLYAAM). The Cytoplasmic segment spans residues 374 to 396 (NRQFRQAYGSILKRGPRSFHRLH).

The protein belongs to the G-protein coupled receptor 1 family. As to quaternary structure, interacts with ARRB2 and ARR3. In terms of processing, phosphorylated by a subset of GPR84-activating ligands. Constitutively phosphorylated at Ser-221 and Ser-224 in the absence of 2-HTP. By contrast, Thr-263 and Thr-264 are phosphorylated only following prior cell treatment with 2-HTP. As to expression, expressed predominantly in hematopoietic tissues. High levels detected in the bone marrow and lower levels in the peripheral leukocytes and lung. Also expressed in brain, heart, muscle, colon, thymus, spleen, kidney, liver, placenta and intestine. Within the leukocyte population expression is higher in neutrophils and eosinophils relative to T- or B-lymphocytes.

It localises to the cell membrane. Functionally, g protein-coupled receptor that responds endogenously to dietary fatty acids or nutrient, specifically medium-chain free fatty acid (FFA) with carbon chain lengths of C9 to C14. Capric acid (C10:0), undecanoic acid (C11:0) and lauric acid (C12:0) are the most potent agonists. In immune cells, functions as a pro-inflammatory receptor via 6-OAU and promotes the expression of pro-inflammatory mediators such as TNFalpha, IL-6 and IL-12B as well as stimulating chemotactic responses through activation of signaling mediators AKT, ERK and NF-kappa-B. In addition, triggers increased bacterial adhesion and phagocytosis in macrophages and regulates pro-inflammatory function via enhancing NLRP3 inflammasome activation. Also plays an important role in inflammation by modulating neutrophil functions. Mechanistically, promotes neutrophil chemotaxis, reactive oxygen species (ROS) production and degranulation via LYN-AKT/ERK pathway. To regulate ROS, communicates with the two formyl peptide receptors FPR2 and FPR1 to control the NADPH oxidase activity in neutrophils. In Homo sapiens (Human), this protein is G-protein coupled receptor 84 (GPR84).